Consider the following 150-residue polypeptide: SsrA-binding protein (150 aa).

Positions lysine 129 to histidine 150 are disordered.

The protein belongs to the SmpB family.

The protein resides in the cytoplasm. Required for rescue of stalled ribosomes mediated by trans-translation. Binds to transfer-messenger RNA (tmRNA), required for stable association of tmRNA with ribosomes. tmRNA and SmpB together mimic tRNA shape, replacing the anticodon stem-loop with SmpB. tmRNA is encoded by the ssrA gene; the 2 termini fold to resemble tRNA(Ala) and it encodes a 'tag peptide', a short internal open reading frame. During trans-translation Ala-aminoacylated tmRNA acts like a tRNA, entering the A-site of stalled ribosomes, displacing the stalled mRNA. The ribosome then switches to translate the ORF on the tmRNA; the nascent peptide is terminated with the 'tag peptide' encoded by the tmRNA and targeted for degradation. The ribosome is freed to recommence translation, which seems to be the essential function of trans-translation. This is SsrA-binding protein from Syntrophotalea carbinolica (strain DSM 2380 / NBRC 103641 / GraBd1) (Pelobacter carbinolicus).